The following is a 20-amino-acid chain: Alpha-basrubrin (20 aa).

Positions 1–13 are enriched in basic and acidic residues; sequence GADFQECMKEHSQ. A disordered region spans residues 1-20; the sequence is GADFQECMKEHSQKQHQHQG.

Possesses antifungal activity against B.cinerea, M.arachidicola and F.oxysporum but not C.comatus and R.solani. Inhibits HIV-1 reverse transcriptase and cell-free translation. The polypeptide is Alpha-basrubrin (Basella alba (Malabar spinach)).